The sequence spans 111 residues: uncharacterized protein (111 aa).

This is an uncharacterized protein from Aquifex aeolicus (strain VF5).